The chain runs to 341 residues: Cobalt-precorrin-5B C(1)-methyltransferase (341 aa).

This sequence belongs to the CbiD family.

The catalysed reaction is Co-precorrin-5B + S-adenosyl-L-methionine = Co-precorrin-6A + S-adenosyl-L-homocysteine. It participates in cofactor biosynthesis; adenosylcobalamin biosynthesis; cob(II)yrinate a,c-diamide from sirohydrochlorin (anaerobic route): step 6/10. Catalyzes the methylation of C-1 in cobalt-precorrin-5B to form cobalt-precorrin-6A. This chain is Cobalt-precorrin-5B C(1)-methyltransferase, found in Picrophilus torridus (strain ATCC 700027 / DSM 9790 / JCM 10055 / NBRC 100828 / KAW 2/3).